A 53-amino-acid polypeptide reads, in one-letter code: UPF0391 membrane protein Patl_1732 (53 aa).

2 helical membrane passes run 4–24 (WAVI…GGIA) and 28–48 (AGIA…SVVM).

This sequence belongs to the UPF0391 family.

The protein localises to the cell membrane. The protein is UPF0391 membrane protein Patl_1732 of Pseudoalteromonas atlantica (strain T6c / ATCC BAA-1087).